A 45-amino-acid polypeptide reads, in one-letter code: ANCSCSTASDYCPILTFCTTGTACSYTPTGCGTGWVYCACNGNFY.

Bacteriocin. This chain is Bacteriocin fulvocin-C, found in Myxococcus fulvus.